Consider the following 309-residue polypeptide: Aspartate carbamoyltransferase catalytic subunit (309 aa).

Carbamoyl phosphate contacts are provided by Arg58 and Thr59. Residue Lys86 coordinates L-aspartate. Carbamoyl phosphate-binding residues include Arg108, His136, and Gln139. Arg170 and Arg224 together coordinate L-aspartate. Carbamoyl phosphate-binding residues include Gly266 and Pro267.

It belongs to the aspartate/ornithine carbamoyltransferase superfamily. ATCase family. In terms of assembly, heterododecamer (2C3:3R2) of six catalytic PyrB chains organized as two trimers (C3), and six regulatory PyrI chains organized as three dimers (R2).

It carries out the reaction carbamoyl phosphate + L-aspartate = N-carbamoyl-L-aspartate + phosphate + H(+). It functions in the pathway pyrimidine metabolism; UMP biosynthesis via de novo pathway; (S)-dihydroorotate from bicarbonate: step 2/3. Catalyzes the condensation of carbamoyl phosphate and aspartate to form carbamoyl aspartate and inorganic phosphate, the committed step in the de novo pyrimidine nucleotide biosynthesis pathway. In Campylobacter concisus (strain 13826), this protein is Aspartate carbamoyltransferase catalytic subunit.